Here is a 141-residue protein sequence, read N- to C-terminus: Large ribosomal subunit protein uL11 (141 aa).

Belongs to the universal ribosomal protein uL11 family. As to quaternary structure, part of the ribosomal stalk of the 50S ribosomal subunit. Interacts with L10 and the large rRNA to form the base of the stalk. L10 forms an elongated spine to which L12 dimers bind in a sequential fashion forming a multimeric L10(L12)X complex. In terms of processing, one or more lysine residues are methylated.

Forms part of the ribosomal stalk which helps the ribosome interact with GTP-bound translation factors. This Sulfurimonas denitrificans (strain ATCC 33889 / DSM 1251) (Thiomicrospira denitrificans (strain ATCC 33889 / DSM 1251)) protein is Large ribosomal subunit protein uL11.